The primary structure comprises 562 residues: Tetratricopeptide repeat protein 34 (562 aa).

The interval 1-30 is disordered; that stretch reads MLHKKPQRANENGISQRKKPSDQDNSSVKE. Residues 19–30 are compositionally biased toward basic and acidic residues; that stretch reads KPSDQDNSSVKE. TPR repeat units lie at residues 51 to 84, 175 to 208, 210 to 242, 304 to 337, 388 to 421, 423 to 455, 461 to 494, and 509 to 542; these read DVSRILCTDALYQLDRIEEAHKMLSLALSNSSQR, KDSLLARARCYGQLGQKKTAIFDFNAILKDEPYN, EALSGKGFMHLTLNQQKEAVHDICLAIKADASY, AHFHILYTDILIAKEKYDEAFNYLRKSFNGNAID, FQAAGQEGNSLIQENQHEKALDYYSLAVISSNNN, KYLRQRAMCLTHLRDYSSAIKDIDKAILRHSSH, AEDYCSKGHILLLSCDEDAATTQYMKAISMEHAS, and AGIFSQVANRYFEQRLFEESWKMSECGLLIDENN.

This is Tetratricopeptide repeat protein 34 (ttc34) from Xenopus laevis (African clawed frog).